We begin with the raw amino-acid sequence, 736 residues long: 1,4-alpha-glucan branching enzyme GlgB (736 aa).

D415 functions as the Nucleophile in the catalytic mechanism. The active-site Proton donor is E470.

This sequence belongs to the glycosyl hydrolase 13 family. GlgB subfamily. Monomer.

The enzyme catalyses Transfers a segment of a (1-&gt;4)-alpha-D-glucan chain to a primary hydroxy group in a similar glucan chain.. Its pathway is glycan biosynthesis; glycogen biosynthesis. Functionally, catalyzes the formation of the alpha-1,6-glucosidic linkages in glycogen by scission of a 1,4-alpha-linked oligosaccharide from growing alpha-1,4-glucan chains and the subsequent attachment of the oligosaccharide to the alpha-1,6 position. This Paraburkholderia xenovorans (strain LB400) protein is 1,4-alpha-glucan branching enzyme GlgB.